We begin with the raw amino-acid sequence, 295 residues long: Phosphatidylglycerol--prolipoprotein diacylglyceryl transferase (295 aa).

7 consecutive transmembrane segments (helical) span residues 17-37, 57-77, 92-112, 127-147, 196-216, 222-242, and 255-275; these read IKVH…WLLG, LLFY…MLFY, VWDG…ACWW, FMAP…FIGA, QLYE…AVSA, YLVG…VEFV, and WLTR…VLLV. Arginine 140 is a binding site for a 1,2-diacyl-sn-glycero-3-phospho-(1'-sn-glycerol).

This sequence belongs to the Lgt family.

It is found in the cell inner membrane. The catalysed reaction is L-cysteinyl-[prolipoprotein] + a 1,2-diacyl-sn-glycero-3-phospho-(1'-sn-glycerol) = an S-1,2-diacyl-sn-glyceryl-L-cysteinyl-[prolipoprotein] + sn-glycerol 1-phosphate + H(+). Its pathway is protein modification; lipoprotein biosynthesis (diacylglyceryl transfer). In terms of biological role, catalyzes the transfer of the diacylglyceryl group from phosphatidylglycerol to the sulfhydryl group of the N-terminal cysteine of a prolipoprotein, the first step in the formation of mature lipoproteins. This is Phosphatidylglycerol--prolipoprotein diacylglyceryl transferase from Stenotrophomonas maltophilia (strain R551-3).